The chain runs to 180 residues: Inner membrane-spanning protein YciB (180 aa).

The next 5 membrane-spanning stretches (helical) occupy residues 25–45 (QNAT…CYII), 49–69 (VSKL…ITLI), 76–96 (IKIK…MSGI), 118–138 (ITLS…NEIV), and 150–170 (FKVF…LPLL).

This sequence belongs to the YciB family.

The protein localises to the cell inner membrane. Its function is as follows. Plays a role in cell envelope biogenesis, maintenance of cell envelope integrity and membrane homeostasis. This is Inner membrane-spanning protein YciB from Rickettsia akari (strain Hartford).